A 205-amino-acid chain; its full sequence is Adenylyl-sulfate kinase (205 aa).

An ATP-binding site is contributed by 39-46; sequence GLSGAGKS. Serine 113 acts as the Phosphoserine intermediate in catalysis.

Belongs to the APS kinase family.

It catalyses the reaction adenosine 5'-phosphosulfate + ATP = 3'-phosphoadenylyl sulfate + ADP + H(+). Its pathway is sulfur metabolism; hydrogen sulfide biosynthesis; sulfite from sulfate: step 2/3. In terms of biological role, catalyzes the synthesis of activated sulfate. The protein is Adenylyl-sulfate kinase of Vibrio parahaemolyticus serotype O3:K6 (strain RIMD 2210633).